We begin with the raw amino-acid sequence, 288 residues long: S-methyl-5'-thioadenosine phosphorylase (288 aa).

Phosphate-binding positions include serine 10, 52-53 (RH), and 85-86 (TA). A substrate-binding site is contributed by methionine 188. Threonine 189 serves as a coordination point for phosphate. 212 to 214 (DYD) is a substrate binding site.

This sequence belongs to the PNP/MTAP phosphorylase family. MTAP subfamily. In terms of assembly, homotrimer.

The protein resides in the cytoplasm. Its subcellular location is the nucleus. The enzyme catalyses S-methyl-5'-thioadenosine + phosphate = 5-(methylsulfanyl)-alpha-D-ribose 1-phosphate + adenine. Its pathway is amino-acid biosynthesis; L-methionine biosynthesis via salvage pathway; S-methyl-5-thio-alpha-D-ribose 1-phosphate from S-methyl-5'-thioadenosine (phosphorylase route): step 1/1. In terms of biological role, catalyzes the reversible phosphorylation of S-methyl-5'-thioadenosine (MTA) to adenine and 5-methylthioribose-1-phosphate. Involved in the breakdown of MTA, a major by-product of polyamine biosynthesis. Responsible for the first step in the methionine salvage pathway after MTA has been generated from S-adenosylmethionine. Has broad substrate specificity with 6-aminopurine nucleosides as preferred substrates. This is S-methyl-5'-thioadenosine phosphorylase from Caenorhabditis elegans.